The chain runs to 232 residues: E3 ubiquitin-protein ligase RNF125 (232 aa).

Positions 1 to 10 (MGSVLSSDSG) are enriched in polar residues. The tract at residues 1–27 (MGSVLSSDSGKSAPPSATPRALERRGD) is disordered. A lipid anchor (N-myristoyl glycine) is attached at Gly-2. Positions 37 and 40 each coordinate Zn(2+). An RING-type zinc finger spans residues 37-76 (CAVCLEVLHQPVRTRCGHVFCRSCIATSLKNNKWTCPYCR). An interaction with the C2HC RNF-type zinc finger region spans residues 43 to 45 (VLH). Residues Cys-52, His-54, Cys-57, Cys-60, Cys-72, Cys-75, Cys-100, and Cys-103 each contribute to the Zn(2+) site. The C2HC RNF-type zinc-finger motif lies at 100-119 (CAECDTLVCLGEMRAHIRTC). The interval 109–113 (LGEMR) is interaction with the RING-type zinc finger. Residues His-115 and Cys-119 each contribute to the Zn(2+) site. Residues 120-128 (QKYIDKYGP) form a linker region region. Positions 210-224 (EEALIRRVLDRSLLE) are required for interaction with ubiquitin and for autoubiquitination.

As to quaternary structure, interacts with UBE2D1. Interacts with VCP/p97; leading to recruit RNF125 to RIGI and promote ubiquitination of RIGI. Autoubiquitinated, leading to its subsequent proteasomal degradation.

The protein resides in the golgi apparatus membrane. The catalysed reaction is S-ubiquitinyl-[E2 ubiquitin-conjugating enzyme]-L-cysteine + [acceptor protein]-L-lysine = [E2 ubiquitin-conjugating enzyme]-L-cysteine + N(6)-ubiquitinyl-[acceptor protein]-L-lysine.. Its pathway is protein modification; protein ubiquitination. Its function is as follows. E3 ubiquitin-protein ligase that mediates ubiquitination and subsequent proteasomal degradation of target proteins, such as RIGI, MAVS/IPS1, IFIH1/MDA5, JAK1 and p53/TP53. Acts as a negative regulator of type I interferon production by mediating ubiquitination of RIGI at 'Lys-181', leading to RIGI degradation. Mediates ubiquitination and subsequent degradation of p53/TP53. Mediates ubiquitination and subsequent degradation of JAK1. Acts as a positive regulator of T-cell activation. The protein is E3 ubiquitin-protein ligase RNF125 (RNF125) of Macaca fascicularis (Crab-eating macaque).